Reading from the N-terminus, the 334-residue chain is tRNA uridine(34) hydroxylase (334 aa).

The Rhodanese domain occupies 123–217; the sequence is SDPDVILVDT…YLEEVKAEES (95 aa). Cys177 (cysteine persulfide intermediate) is an active-site residue.

This sequence belongs to the TrhO family.

It carries out the reaction uridine(34) in tRNA + AH2 + O2 = 5-hydroxyuridine(34) in tRNA + A + H2O. In terms of biological role, catalyzes oxygen-dependent 5-hydroxyuridine (ho5U) modification at position 34 in tRNAs. In Shewanella baltica (strain OS185), this protein is tRNA uridine(34) hydroxylase.